A 666-amino-acid chain; its full sequence is Semaphorin-7A (666 aa).

Residues 1-21 form a disordered region; that stretch reads MTPPPPGRAAPSAPRARVPGP. The first 44 residues, 1-44, serve as a signal peptide directing secretion; that stretch reads MTPPPPGRAAPSAPRARVPGPPARLGLPLRLRLLLLLWAAAASA. A compositionally biased stretch (low complexity) spans 9-21; the sequence is AAPSAPRARVPGP. The 438-residue stretch at 53 to 490 folds into the Sema domain; it reads RIFAVWKGHV…SQWEVSQVPL (438 aa). N-linked (GlcNAc...) asparagine glycosylation is present at Asn105. A disulfide bridge links Cys120 with Cys126. Arg135 bears the Asymmetric dimethylarginine mark. A disulfide bridge connects residues Cys143 and Cys152. N-linked (GlcNAc...) asparagine glycans are attached at residues Asn157 and Asn258. 7 cysteine pairs are disulfide-bonded: Cys266–Cys366, Cys291–Cys335, Cys493–Cys511, Cys500–Cys541, Cys503–Cys518, Cys566–Cys613, and Cys587–Cys596. The interval 267–269 is interaction with integrins; that stretch reads RGD. Residues 267–269 carry the Cell attachment site motif; it reads RGD. Residue Asn330 is glycosylated (N-linked (GlcNAc...) asparagine). The 86-residue stretch at 544–629 folds into the Ig-like C2-type domain; it reads PKPDKAPLQK…YFREAQHWQL (86 aa). Asn602 carries an N-linked (GlcNAc...) asparagine glycan. Residue Ala648 is the site of GPI-anchor amidated alanine attachment. A propeptide spans 649 to 666 (removed in mature form); it reads ASLWLGVLPTLTLGLLVH.

Belongs to the semaphorin family. In terms of assembly, interacts with ITGA1 and ITGB1. Interacts with PLXNC1. As to expression, detected in skin keratinocytes and on endothelial cells from skin blood vessels (at protein level). Expressed in fibroblasts, keratinocytes, melanocytes, placenta, testis, ovary, spleen, brain, spinal cord, lung, heart, adrenal gland, lymph nodes, thymus, intestine and kidney.

It localises to the cell membrane. Functionally, plays an important role in integrin-mediated signaling and functions both in regulating cell migration and immune responses. Promotes formation of focal adhesion complexes, activation of the protein kinase PTK2/FAK1 and subsequent phosphorylation of MAPK1 and MAPK3. Promotes production of pro-inflammatory cytokines by monocytes and macrophages. Plays an important role in modulating inflammation and T-cell-mediated immune responses. Promotes axon growth in the embryonic olfactory bulb. Promotes attachment, spreading and dendrite outgrowth in melanocytes. The chain is Semaphorin-7A (SEMA7A) from Homo sapiens (Human).